We begin with the raw amino-acid sequence, 389 residues long: Pre-mRNA-splicing factor PRP46 (389 aa).

WD repeat units lie at residues 83–123 (AHQG…LKAV), 126–165 (GHVL…SDAG), 173–212 (GHLG…EAMT), 215–254 (GHTN…TELL), 257–298 (NHSK…NEFG), 308–347 (DNSR…LQQS), and 356–389 (PEQS…GTSY).

It belongs to the WD repeat PRL1/PRL2 family. As to quaternary structure, associated with the spliceosome.

It is found in the cytoplasm. Its subcellular location is the nucleus. Its function is as follows. Involved in pre-mRNA splicing and required for cell cycle progression at G2/M. The protein is Pre-mRNA-splicing factor PRP46 (PRP46) of Candida albicans (strain SC5314 / ATCC MYA-2876) (Yeast).